A 446-amino-acid chain; its full sequence is ATP-dependent protease ATPase subunit HslU (446 aa).

Residues isoleucine 18, 60–65, aspartate 259, glutamate 324, and arginine 396 contribute to the ATP site; that span reads GVGKTE.

This sequence belongs to the ClpX chaperone family. HslU subfamily. A double ring-shaped homohexamer of HslV is capped on each side by a ring-shaped HslU homohexamer. The assembly of the HslU/HslV complex is dependent on binding of ATP.

It is found in the cytoplasm. ATPase subunit of a proteasome-like degradation complex; this subunit has chaperone activity. The binding of ATP and its subsequent hydrolysis by HslU are essential for unfolding of protein substrates subsequently hydrolyzed by HslV. HslU recognizes the N-terminal part of its protein substrates and unfolds these before they are guided to HslV for hydrolysis. The chain is ATP-dependent protease ATPase subunit HslU from Vibrio atlanticus (strain LGP32) (Vibrio splendidus (strain Mel32)).